An 859-amino-acid polypeptide reads, in one-letter code: Leucine--tRNA ligase (859 aa).

The short motif at 42 to 52 (PYPSGRLHMGH) is the 'HIGH' region element. Residues 618–622 (KMSKS) carry the 'KMSKS' region motif. Lys-621 provides a ligand contact to ATP.

This sequence belongs to the class-I aminoacyl-tRNA synthetase family.

The protein resides in the cytoplasm. The enzyme catalyses tRNA(Leu) + L-leucine + ATP = L-leucyl-tRNA(Leu) + AMP + diphosphate. The polypeptide is Leucine--tRNA ligase (Shewanella sp. (strain W3-18-1)).